A 367-amino-acid chain; its full sequence is Alanine racemase (367 aa).

The active-site Proton acceptor; specific for D-alanine is the Lys-35. Lys-35 is subject to N6-(pyridoxal phosphate)lysine. Substrate is bound at residue Arg-130. The active-site Proton acceptor; specific for L-alanine is the Tyr-258. Met-306 serves as a coordination point for substrate.

Belongs to the alanine racemase family. Requires pyridoxal 5'-phosphate as cofactor.

It catalyses the reaction L-alanine = D-alanine. The protein operates within amino-acid biosynthesis; D-alanine biosynthesis; D-alanine from L-alanine: step 1/1. Functionally, catalyzes the interconversion of L-alanine and D-alanine. May also act on other amino acids. In Acinetobacter baumannii (strain SDF), this protein is Alanine racemase (alr).